Consider the following 361-residue polypeptide: Histidinol-phosphate aminotransferase (361 aa).

Lys221 carries the post-translational modification N6-(pyridoxal phosphate)lysine.

It belongs to the class-II pyridoxal-phosphate-dependent aminotransferase family. Histidinol-phosphate aminotransferase subfamily. Requires pyridoxal 5'-phosphate as cofactor.

The enzyme catalyses L-histidinol phosphate + 2-oxoglutarate = 3-(imidazol-4-yl)-2-oxopropyl phosphate + L-glutamate. It functions in the pathway amino-acid biosynthesis; L-histidine biosynthesis; L-histidine from 5-phospho-alpha-D-ribose 1-diphosphate: step 7/9. The sequence is that of Histidinol-phosphate aminotransferase from Methanocella arvoryzae (strain DSM 22066 / NBRC 105507 / MRE50).